The following is a 200-amino-acid chain: dITP/XTP pyrophosphatase (200 aa).

19-24 contacts substrate; it reads TSNAGK. The Mg(2+) site is built by E49 and D78. D78 functions as the Proton acceptor in the catalytic mechanism. Substrate contacts are provided by residues S79, 158–161, K181, and 186–187; these read FGYD and HR.

This sequence belongs to the HAM1 NTPase family. In terms of assembly, homodimer. The cofactor is Mg(2+).

It carries out the reaction XTP + H2O = XMP + diphosphate + H(+). The catalysed reaction is dITP + H2O = dIMP + diphosphate + H(+). It catalyses the reaction ITP + H2O = IMP + diphosphate + H(+). Functionally, pyrophosphatase that catalyzes the hydrolysis of nucleoside triphosphates to their monophosphate derivatives, with a high preference for the non-canonical purine nucleotides XTP (xanthosine triphosphate), dITP (deoxyinosine triphosphate) and ITP. Seems to function as a house-cleaning enzyme that removes non-canonical purine nucleotides from the nucleotide pool, thus preventing their incorporation into DNA/RNA and avoiding chromosomal lesions. The protein is dITP/XTP pyrophosphatase of Deinococcus radiodurans (strain ATCC 13939 / DSM 20539 / JCM 16871 / CCUG 27074 / LMG 4051 / NBRC 15346 / NCIMB 9279 / VKM B-1422 / R1).